The following is a 1427-amino-acid chain: Multidrug resistance-associated protein 5 (1427 aa).

Topologically, residues 1–147 (MPSDSEEVCL…IYRFISTRLW (147 aa)) are cytoplasmic. A helical membrane pass occupies residues 148 to 168 (FSCAVFFFCLIFGFIGPTCFI). The ABC transmembrane type-1 1 domain occupies 151–432 (AVFFFCLIFG…IPYGSRYLAE (282 aa)). The Extracellular portion of the chain corresponds to 169 to 185 (RRLIAFAENPERDEQSR). The chain crosses the membrane as a helical span at residues 186-206 (IVYSYGIALVAAISVVEFARV). Topologically, residues 207-268 (LSYGATWAVS…RLFDAVTFAP (62 aa)) are cytoplasmic. Residues 269–289 (LVLVGPLVLVGGIGYLLMVIG) form a helical membrane-spanning segment. Position 290 (Arg290) is a topological domain, extracellular. Residues 291-311 (WSLLGILVFFVFDVIQFGLGK) form a helical membrane-spanning segment. The Cytoplasmic portion of the chain corresponds to 312–375 (SMVACRNLAI…RKSGYAQSLA (64 aa)). The helical transmembrane segment at 376 to 396 (IACGPVVPVVAAILTFVGVVL) threads the bilayer. Residues 397–399 (AGN) are Extracellular-facing. A helical transmembrane segment spans residues 400 to 420 (DLLASDAFSAITVYFVMLFGI). The Cytoplasmic portion of the chain corresponds to 421 to 770 (RMIPYGSRYL…TIAWRIYKQY (350 aa)). One can recognise an ABC transporter 1 domain in the interval 486–707 (PTENEVIVVE…NDAYKTFVDA (222 aa)). ATP is bound at residue 518 to 525 (GAVGCGKS). The helical transmembrane segment at 771-791 (IHAAGGWPIWTCLVIGFIVNV) threads the bilayer. The region spanning 783-1078 (LVIGFIVNVV…AVRTQTELEA (296 aa)) is the ABC transmembrane type-1 2 domain. Residues 792-833 (VSNIFSTYWLSRWLKKGHDETTTITNGTEFLEMKTSLADSPV) lie on the Extracellular side of the membrane. An N-linked (GlcNAc...) asparagine glycan is attached at Asn817. The helical transmembrane segment at 834–854 (TGFYAAVYLVALVVLTISGLF) threads the bilayer. Over 855–909 (KACVFVKVSLTAATRLHDRMFQAVIHGATSFFDSTPTGRILNRFSKDMDEIDVKL) the chain is Cytoplasmic. A helical membrane pass occupies residues 910–930 (PFTAEVFLQNMITCLGFLVVI). Residue Thr931 is a topological domain, extracellular. The chain crosses the membrane as a helical span at residues 932-952 (SVFPYFLLFAIPLFVVFVVFV). The Cytoplasmic segment spans residues 953 to 1022 (SCFRAGIRNL…MFQSAMRWLA (70 aa)). A helical transmembrane segment spans residues 1023–1043 (VWLDLLVVVMTAIVALLTVML). Residues 1044–1049 (TGTVSP) are Extracellular-facing. A helical transmembrane segment spans residues 1050 to 1070 (ADAGMAIAFAVQMSGIFQFAV). Topologically, residues 1071 to 1427 (RTQTELEAKM…SSDTDIEVVQ (357 aa)) are cytoplasmic. The 235-residue stretch at 1117 to 1351 (INFSEVNLRY…DWSVYKLEDK (235 aa)) folds into the ABC transporter 2 domain. Position 1151–1158 (1151–1158 (GRTGSGKS)) interacts with ATP. Positions 1361 to 1427 (VGENSEHSME…SSDTDIEVVQ (67 aa)) are disordered. Residues 1382–1418 (DIVKVENEQKDSSDDVVHIESGDDDVKADSSEVKETS) show a composition bias toward basic and acidic residues.

The protein belongs to the ABC transporter superfamily. ABCC family. Conjugate transporter (TC 3.A.1.208) subfamily. In terms of tissue distribution, highly expressed in the intestine and pharynx. Expressed at low levels in the hypodermis and in some neurons.

It is found in the basolateral cell membrane. Heme transporter required for the export of intestinal heme to different tissues and subcellular compartments. Also, required for the export of vitamin B12 from the intestine of the mother to the embryo to support embryonic development. The chain is Multidrug resistance-associated protein 5 from Caenorhabditis elegans.